Here is a 302-residue protein sequence, read N- to C-terminus: MKIAILSRNKRLYSTRRLVEAGEAAGHEMHVIDTLRCYMSMVAHKPEIHYKGEVLEGFDAVIPRIGASITQYGTAVVRQFEMMGVFPVNESVAISRSRDKLRSLQLLSRKGVGLPITGFAHSPDDIPDLINMVRGAPLVIKMLEGTQGIGVVLAETRKAAESVIEAFMGLNVSVMVQEYIKEAGGADIRCFVVGGKVIAAMKRQAAPGEFRSNLHRGGSASLIRITPEERATAVRAARIMGLNVAGVDILRSHHGPVVMEVNSSPGLEGIETATNKDVAGLLIKFIEKDARPYRTQTKGSKG.

One can recognise an ATP-grasp domain in the interval 104 to 287 (LQLLSRKGVG…VAGLLIKFIE (184 aa)). Residues lysine 141, 178-179 (EY), aspartate 187, and 211-213 (RSN) each bind ATP. Aspartate 248, glutamate 260, and asparagine 262 together coordinate Mg(2+). Positions 248, 260, and 262 each coordinate Mn(2+).

This sequence belongs to the RimK family. It depends on Mg(2+) as a cofactor. Requires Mn(2+) as cofactor.

This is Probable alpha-L-glutamate ligase from Alcanivorax borkumensis (strain ATCC 700651 / DSM 11573 / NCIMB 13689 / SK2).